A 382-amino-acid chain; its full sequence is Queuine tRNA-ribosyltransferase (382 aa).

The Proton acceptor role is filled by aspartate 96. Substrate is bound by residues aspartate 96–phenylalanine 100, aspartate 151, glutamine 194, and glycine 221. The RNA binding stretch occupies residues glycine 252 to serine 258. Aspartate 271 acts as the Nucleophile in catalysis. Positions threonine 276–arginine 280 are RNA binding; important for wobble base 34 recognition. Zn(2+) is bound by residues cysteine 309, cysteine 311, cysteine 314, and histidine 340.

The protein belongs to the queuine tRNA-ribosyltransferase family. Homodimer. Within each dimer, one monomer is responsible for RNA recognition and catalysis, while the other monomer binds to the replacement base PreQ1. It depends on Zn(2+) as a cofactor.

The catalysed reaction is 7-aminomethyl-7-carbaguanine + guanosine(34) in tRNA = 7-aminomethyl-7-carbaguanosine(34) in tRNA + guanine. The protein operates within tRNA modification; tRNA-queuosine biosynthesis. In terms of biological role, catalyzes the base-exchange of a guanine (G) residue with the queuine precursor 7-aminomethyl-7-deazaguanine (PreQ1) at position 34 (anticodon wobble position) in tRNAs with GU(N) anticodons (tRNA-Asp, -Asn, -His and -Tyr). Catalysis occurs through a double-displacement mechanism. The nucleophile active site attacks the C1' of nucleotide 34 to detach the guanine base from the RNA, forming a covalent enzyme-RNA intermediate. The proton acceptor active site deprotonates the incoming PreQ1, allowing a nucleophilic attack on the C1' of the ribose to form the product. After dissociation, two additional enzymatic reactions on the tRNA convert PreQ1 to queuine (Q), resulting in the hypermodified nucleoside queuosine (7-(((4,5-cis-dihydroxy-2-cyclopenten-1-yl)amino)methyl)-7-deazaguanosine). The protein is Queuine tRNA-ribosyltransferase of Lactococcus lactis subsp. lactis (strain IL1403) (Streptococcus lactis).